Consider the following 110-residue polypeptide: ATP-dependent Clp protease adapter protein ClpS (110 aa).

The protein belongs to the ClpS family. In terms of assembly, binds to the N-terminal domain of the chaperone ClpA.

Its function is as follows. Involved in the modulation of the specificity of the ClpAP-mediated ATP-dependent protein degradation. In Bartonella henselae (strain ATCC 49882 / DSM 28221 / CCUG 30454 / Houston 1) (Rochalimaea henselae), this protein is ATP-dependent Clp protease adapter protein ClpS.